Reading from the N-terminus, the 284-residue chain is Protein-S-isoprenylcysteine O-methyltransferase (284 aa).

Residues 1–16 are Cytoplasmic-facing; that stretch reads MAGCAARAPPGSEARL. Residues 17–33 form a helical membrane-spanning segment; sequence SLATFLLGASVLALPLL. The Lumenal segment spans residues 34-41; sequence TRAGLQGR. The chain crosses the membrane as a helical span at residues 42–59; that stretch reads TGLALYVAGLNALLLLLY. Topologically, residues 60–69 are cytoplasmic; sequence RPPRYQIAIR. A helical transmembrane segment spans residues 70-87; that stretch reads ACFLGFVFGCGTLLSFSQ. Residues 88–92 are Lumenal-facing; it reads SSWSH. A helical membrane pass occupies residues 93–112; it reads FGWYMCSLSLFHYSEYLVTA. The Cytoplasmic portion of the chain corresponds to 113–131; that stretch reads VNNPKSLSLDSFLLNHSLE. A helical membrane pass occupies residues 132 to 149; that stretch reads YTVAALSSWLEFTLENIF. Topologically, residues 150 to 154 are lumenal; sequence WPELK. The helical transmembrane segment at 155–174 threads the bilayer; that stretch reads QITWLSVTGLLMVVFGECLR. Residues 175-212 lie on the Cytoplasmic side of the membrane; the sequence is KAAMFTAGSNFNHVVQNEKSDTHTLVTSGVYAWFRHPS. S-adenosyl-L-methionine contacts are provided by residues Q190, 197-200, Y205, and 210-213; these read HTLV and HPSY. A helical transmembrane segment spans residues 213 to 228; sequence YVGWFYWSIGTQVMLC. A topological domain (lumenal) is located at residue N229. A helical transmembrane segment spans residues 230-244; that stretch reads PICGVSYALTVWRFF. Residues 245–284 are Cytoplasmic-facing; the sequence is RDRTEEEEISLIHFFGEEYLEYKKRVPTGLPFIKGVKVDL. R247 contacts substrate. An S-adenosyl-L-methionine-binding site is contributed by E251.

Belongs to the class VI-like SAM-binding methyltransferase superfamily. Isoprenylcysteine carboxyl methyltransferase family. As to expression, ubiquitously expressed. Expressed at higher levels in the cerebellum and putamen than in other brain regions. Abundant expression seen in the Purkinje cells and pontine neurons.

The protein resides in the endoplasmic reticulum membrane. The enzyme catalyses [protein]-C-terminal S-[(2E,6E)-farnesyl]-L-cysteine + S-adenosyl-L-methionine = [protein]-C-terminal S-[(2E,6E)-farnesyl]-L-cysteine methyl ester + S-adenosyl-L-homocysteine. With respect to regulation, competitively inhibited by N-acetyl-S-trans,trans-farnesyl-l-cysteine (AFC). Functionally, catalyzes the post-translational methylation of isoprenylated C-terminal cysteine residues. The sequence is that of Protein-S-isoprenylcysteine O-methyltransferase (ICMT) from Homo sapiens (Human).